Here is a 180-residue protein sequence, read N- to C-terminus: Large ribosomal subunit protein uL6 (180 aa).

It belongs to the universal ribosomal protein uL6 family. As to quaternary structure, part of the 50S ribosomal subunit.

This protein binds to the 23S rRNA, and is important in its secondary structure. It is located near the subunit interface in the base of the L7/L12 stalk, and near the tRNA binding site of the peptidyltransferase center. In Clostridium botulinum (strain Eklund 17B / Type B), this protein is Large ribosomal subunit protein uL6.